Here is a 241-residue protein sequence, read N- to C-terminus: tRNA (guanine-N(7)-)-methyltransferase (241 aa).

Residues 1–10 (MTESNDTPIQ) are compositionally biased toward polar residues. The interval 1–20 (MTESNDTPIQTEEGDERQHR) is disordered. S-adenosyl-L-methionine-binding residues include E71, E96, D123, and D146. The active site involves D146. Substrate is bound by residues K150, D182, and 219-222 (TKFE).

Belongs to the class I-like SAM-binding methyltransferase superfamily. TrmB family.

The catalysed reaction is guanosine(46) in tRNA + S-adenosyl-L-methionine = N(7)-methylguanosine(46) in tRNA + S-adenosyl-L-homocysteine. Its pathway is tRNA modification; N(7)-methylguanine-tRNA biosynthesis. In terms of biological role, catalyzes the formation of N(7)-methylguanine at position 46 (m7G46) in tRNA. The chain is tRNA (guanine-N(7)-)-methyltransferase from Pseudomonas fluorescens (strain Pf0-1).